The chain runs to 258 residues: Acidic leucine-rich nuclear phosphoprotein 32 family member E (258 aa).

Met1 bears the N-acetylmethionine mark. LRR repeat units follow at residues 18 to 38 (EVTELVLDNCLCVNGEIEGLN), 43 to 64 (ELEFLSMANVELSSLARLPSLN), 65 to 87 (KLRKLELSDNIISGGLEVLAEKC), and 89 to 110 (NLTYLNLSGNKIKDLSTVEALQ). Lys68 is covalently cross-linked (Glycyl lysine isopeptide (Lys-Gly) (interchain with G-Cter in SUMO2)). In terms of domain architecture, LRRCT spans 123-161 (CEITNLEDYRESIFELLQQITYLDGFDQEDNEAPDSEEE). Composition is skewed to acidic residues over residues 149 to 206 (DQED…EEEV) and 216 to 238 (IQDEEDDDDYVDEGEEEEEEEEE). The interval 149 to 258 (DQEDNEAPDS…AEDDGEEDDD (110 aa)) is disordered. The interval 205–258 (EVGLSYLMKEEIQDEEDDDDYVDEGEEEEEEEEEGPRGEKRKRDAEDDGEEDDD) is ZID domain. Residues 239 to 249 (GPRGEKRKRDA) show a composition bias toward basic and acidic residues.

This sequence belongs to the ANP32 family. Component of a SWR1-like complex, composed of EP400, KAT5/TIP60, TRRAP, BRD8, RUVBL1, RUVBL2, ING3 and ANP32E; the complex does not contain SRCAP. Interacts with H2A.Z/H2AZ1. Interacts with the importin alpha KPNA1 and KPNA2. Phosphorylated. The phosphorylation is nuclear localization signal (NLS)-dependent.

The protein resides in the cytoplasm. Its subcellular location is the nucleus. Its function is as follows. Histone chaperone that specifically mediates the genome-wide removal of histone H2A.Z/H2AZ1 from the nucleosome: removes H2A.Z/H2AZ1 from its normal sites of deposition, especially from enhancer and insulator regions. Not involved in deposition of H2A.Z/H2AZ1 in the nucleosome. May stabilize the evicted H2A.Z/H2AZ1-H2B dimer, thus shifting the equilibrium towards dissociation and the off-chromatin state. Inhibits activity of protein phosphatase 2A (PP2A). Does not inhibit protein phosphatase 1. May play a role in cerebellar development and synaptogenesis. This is Acidic leucine-rich nuclear phosphoprotein 32 family member E (Anp32e) from Rattus norvegicus (Rat).